The primary structure comprises 331 residues: Trans-O-hydroxybenzylidenepyruvate hydratase-aldolase (331 aa).

It belongs to the DapA family.

The catalysed reaction is (3E)-4-(2-hydroxyphenyl)-2-oxobut-3-enoate + H2O = salicylaldehyde + pyruvate. The protein operates within aromatic compound metabolism; naphthalene degradation. Its function is as follows. Involved in the naphthalene upper catabolic pathway. Catalyzes the transformation of trans-O-hydroxybenzylidenepyruvate (THBPA) to salicylaldehyde and pyruvate. The reaction is reversible. Can also use substrate which carry trans-alpha,beta-unsaturated keto acid side chain and adjacent hydroxyl group such as trans-4-(3-hydroxy-2-thianaphthenyl)-2-oxo-but-3-enoate, trans-4-(3-hydroxy-2-benzofuranyl)-2-oxobut-3-enoate, and trans-4-(3-hydroxy-2-thienyl)-2-oxobut-3-enoate. This Pseudomonas putida (Arthrobacter siderocapsulatus) protein is Trans-O-hydroxybenzylidenepyruvate hydratase-aldolase (nahE).